Reading from the N-terminus, the 215-residue chain is Large ribosomal subunit protein uL4 (215 aa).

Positions 43–97 (RRQGTHSTKTRAEVSGGGKKPWRQKGTGRARAGSTRSPIWVGGGKTHTPKPRDYS) are disordered.

The protein belongs to the universal ribosomal protein uL4 family. Part of the 50S ribosomal subunit.

In terms of biological role, one of the primary rRNA binding proteins, this protein initially binds near the 5'-end of the 23S rRNA. It is important during the early stages of 50S assembly. It makes multiple contacts with different domains of the 23S rRNA in the assembled 50S subunit and ribosome. Functionally, forms part of the polypeptide exit tunnel. The polypeptide is Large ribosomal subunit protein uL4 (Brachyspira hyodysenteriae (strain ATCC 49526 / WA1)).